Consider the following 307-residue polypeptide: Farnesol kinase, chloroplastic (307 aa).

The transit peptide at 1-65 directs the protein to the chloroplast; it reads MATTSTTTKL…TKIRKSSLAA (65 aa). 7 helical membrane passes run 77-97, 116-136, 137-157, 177-194, 197-217, 237-257, and 265-285; these read VCAF…WGEI, IGLV…GALF, ASLV…GVYH, GPLY…YYWK, PIAI…DIVG, IGMA…FASF, and GMIL…SLPI.

The protein belongs to the polyprenol kinase family.

The protein resides in the plastid. The protein localises to the chloroplast membrane. The enzyme catalyses (2E,6E)-farnesol + CTP = (2E,6E)-farnesyl phosphate + CDP + H(+). It catalyses the reaction (2E,6E)-farnesol + ATP = (2E,6E)-farnesyl phosphate + ADP + H(+). The catalysed reaction is (2E)-geraniol + ATP = (2E)-geranyl phosphate + ADP + H(+). It carries out the reaction (2E,6E,10E)-geranylgeraniol + ATP = (2E,6E,10E)-geranylgeranyl phosphate + ADP + H(+). Functionally, kinase involved in negative regulation of abscisic acid (ABA) signaling. Substrate preference is farnesol &gt; geraniol &gt; geranylgeraniol, but has no activity with farnesyl phosphate. Can use CTP &gt; ATP &gt; GTP = UTP as phosphoryl donor. This is Farnesol kinase, chloroplastic from Arabidopsis thaliana (Mouse-ear cress).